A 572-amino-acid chain; its full sequence is Proline--tRNA ligase (572 aa).

Belongs to the class-II aminoacyl-tRNA synthetase family. ProS type 1 subfamily. In terms of assembly, homodimer.

It is found in the cytoplasm. The catalysed reaction is tRNA(Pro) + L-proline + ATP = L-prolyl-tRNA(Pro) + AMP + diphosphate. In terms of biological role, catalyzes the attachment of proline to tRNA(Pro) in a two-step reaction: proline is first activated by ATP to form Pro-AMP and then transferred to the acceptor end of tRNA(Pro). As ProRS can inadvertently accommodate and process non-cognate amino acids such as alanine and cysteine, to avoid such errors it has two additional distinct editing activities against alanine. One activity is designated as 'pretransfer' editing and involves the tRNA(Pro)-independent hydrolysis of activated Ala-AMP. The other activity is designated 'posttransfer' editing and involves deacylation of mischarged Ala-tRNA(Pro). The misacylated Cys-tRNA(Pro) is not edited by ProRS. The chain is Proline--tRNA ligase from Pectobacterium carotovorum subsp. carotovorum (strain PC1).